The primary structure comprises 150 residues: Large ribosomal subunit protein bL9 (150 aa).

It belongs to the bacterial ribosomal protein bL9 family.

Functionally, binds to the 23S rRNA. This is Large ribosomal subunit protein bL9 from Leuconostoc citreum (strain KM20).